The chain runs to 577 residues: Proline--tRNA ligase (577 aa).

The protein belongs to the class-II aminoacyl-tRNA synthetase family. ProS type 1 subfamily. Homodimer.

Its subcellular location is the cytoplasm. It carries out the reaction tRNA(Pro) + L-proline + ATP = L-prolyl-tRNA(Pro) + AMP + diphosphate. In terms of biological role, catalyzes the attachment of proline to tRNA(Pro) in a two-step reaction: proline is first activated by ATP to form Pro-AMP and then transferred to the acceptor end of tRNA(Pro). As ProRS can inadvertently accommodate and process non-cognate amino acids such as alanine and cysteine, to avoid such errors it has two additional distinct editing activities against alanine. One activity is designated as 'pretransfer' editing and involves the tRNA(Pro)-independent hydrolysis of activated Ala-AMP. The other activity is designated 'posttransfer' editing and involves deacylation of mischarged Ala-tRNA(Pro). The misacylated Cys-tRNA(Pro) is not edited by ProRS. The sequence is that of Proline--tRNA ligase from Chlamydia caviae (strain ATCC VR-813 / DSM 19441 / 03DC25 / GPIC) (Chlamydophila caviae).